The chain runs to 227 residues: Cytochrome c oxidase subunit 2 (227 aa).

The Mitochondrial intermembrane portion of the chain corresponds to 1-14 (MAYPLQLGLQDATS). Residues 15–45 (PIMEELMNFHDHTLMIVFLISSLVLYIISLM) traverse the membrane as a helical segment. Residues 46 to 59 (LTTKLTHTSTMDAQ) are Mitochondrial matrix-facing. The helical transmembrane segment at 60 to 87 (EVETIWTILPAAILVLIALPSLRILYMM) threads the bilayer. The Mitochondrial intermembrane segment spans residues 88 to 227 (DEINNPVLTV…YFENWSASMI (140 aa)). The Cu cation site is built by histidine 161, cysteine 196, glutamate 198, cysteine 200, histidine 204, and methionine 207. Residue glutamate 198 participates in Mg(2+) binding. Tyrosine 218 is subject to Phosphotyrosine.

Belongs to the cytochrome c oxidase subunit 2 family. In terms of assembly, component of the cytochrome c oxidase (complex IV, CIV), a multisubunit enzyme composed of 14 subunits. The complex is composed of a catalytic core of 3 subunits MT-CO1, MT-CO2 and MT-CO3, encoded in the mitochondrial DNA, and 11 supernumerary subunits COX4I, COX5A, COX5B, COX6A, COX6B, COX6C, COX7A, COX7B, COX7C, COX8 and NDUFA4, which are encoded in the nuclear genome. The complex exists as a monomer or a dimer and forms supercomplexes (SCs) in the inner mitochondrial membrane with NADH-ubiquinone oxidoreductase (complex I, CI) and ubiquinol-cytochrome c oxidoreductase (cytochrome b-c1 complex, complex III, CIII), resulting in different assemblies (supercomplex SCI(1)III(2)IV(1) and megacomplex MCI(2)III(2)IV(2)). Found in a complex with TMEM177, COA6, COX18, COX20, SCO1 and SCO2. Interacts with TMEM177 in a COX20-dependent manner. Interacts with COX20. Interacts with COX16. It depends on Cu cation as a cofactor.

It is found in the mitochondrion inner membrane. The enzyme catalyses 4 Fe(II)-[cytochrome c] + O2 + 8 H(+)(in) = 4 Fe(III)-[cytochrome c] + 2 H2O + 4 H(+)(out). Functionally, component of the cytochrome c oxidase, the last enzyme in the mitochondrial electron transport chain which drives oxidative phosphorylation. The respiratory chain contains 3 multisubunit complexes succinate dehydrogenase (complex II, CII), ubiquinol-cytochrome c oxidoreductase (cytochrome b-c1 complex, complex III, CIII) and cytochrome c oxidase (complex IV, CIV), that cooperate to transfer electrons derived from NADH and succinate to molecular oxygen, creating an electrochemical gradient over the inner membrane that drives transmembrane transport and the ATP synthase. Cytochrome c oxidase is the component of the respiratory chain that catalyzes the reduction of oxygen to water. Electrons originating from reduced cytochrome c in the intermembrane space (IMS) are transferred via the dinuclear copper A center (CU(A)) of subunit 2 and heme A of subunit 1 to the active site in subunit 1, a binuclear center (BNC) formed by heme A3 and copper B (CU(B)). The BNC reduces molecular oxygen to 2 water molecules using 4 electrons from cytochrome c in the IMS and 4 protons from the mitochondrial matrix. The chain is Cytochrome c oxidase subunit 2 (MT-CO2) from Micaelamys namaquensis (Namaqua rock rat).